We begin with the raw amino-acid sequence, 357 residues long: UDP-N-acetylglucosamine--N-acetylmuramyl-(pentapeptide) pyrophosphoryl-undecaprenol N-acetylglucosamine transferase (357 aa).

UDP-N-acetyl-alpha-D-glucosamine-binding positions include 12–14 (TGG), asparagine 124, arginine 163, serine 191, isoleucine 245, 264–269 (ALTVSE), and glutamine 290.

The protein belongs to the glycosyltransferase 28 family. MurG subfamily.

It is found in the cell inner membrane. The catalysed reaction is di-trans,octa-cis-undecaprenyl diphospho-N-acetyl-alpha-D-muramoyl-L-alanyl-D-glutamyl-meso-2,6-diaminopimeloyl-D-alanyl-D-alanine + UDP-N-acetyl-alpha-D-glucosamine = di-trans,octa-cis-undecaprenyl diphospho-[N-acetyl-alpha-D-glucosaminyl-(1-&gt;4)]-N-acetyl-alpha-D-muramoyl-L-alanyl-D-glutamyl-meso-2,6-diaminopimeloyl-D-alanyl-D-alanine + UDP + H(+). Its pathway is cell wall biogenesis; peptidoglycan biosynthesis. Functionally, cell wall formation. Catalyzes the transfer of a GlcNAc subunit on undecaprenyl-pyrophosphoryl-MurNAc-pentapeptide (lipid intermediate I) to form undecaprenyl-pyrophosphoryl-MurNAc-(pentapeptide)GlcNAc (lipid intermediate II). In Nitrosospira multiformis (strain ATCC 25196 / NCIMB 11849 / C 71), this protein is UDP-N-acetylglucosamine--N-acetylmuramyl-(pentapeptide) pyrophosphoryl-undecaprenol N-acetylglucosamine transferase.